The sequence spans 467 residues: Glycine--tRNA ligase (467 aa).

Substrate is bound by residues R100 and E175. ATP contacts are provided by residues 207 to 209 (RNE), 217 to 222 (FRTREF), 291 to 292 (EL), and 335 to 338 (GADR). 222–226 (FEQME) is a substrate binding site. 331–335 (EPSLG) is a binding site for substrate.

The protein belongs to the class-II aminoacyl-tRNA synthetase family. Homodimer.

Its subcellular location is the cytoplasm. The enzyme catalyses tRNA(Gly) + glycine + ATP = glycyl-tRNA(Gly) + AMP + diphosphate. In terms of biological role, catalyzes the attachment of glycine to tRNA(Gly). The sequence is that of Glycine--tRNA ligase from Clostridium perfringens (strain 13 / Type A).